Here is a 258-residue protein sequence, read N- to C-terminus: Ribosomal RNA small subunit methyltransferase A (258 aa).

Residues His-13, Leu-15, Gly-40, Glu-61, Asp-86, and Asn-106 each contribute to the S-adenosyl-L-methionine site.

Belongs to the class I-like SAM-binding methyltransferase superfamily. rRNA adenine N(6)-methyltransferase family. RsmA subfamily.

It localises to the cytoplasm. The enzyme catalyses adenosine(1518)/adenosine(1519) in 16S rRNA + 4 S-adenosyl-L-methionine = N(6)-dimethyladenosine(1518)/N(6)-dimethyladenosine(1519) in 16S rRNA + 4 S-adenosyl-L-homocysteine + 4 H(+). In terms of biological role, specifically dimethylates two adjacent adenosines (A1518 and A1519) in the loop of a conserved hairpin near the 3'-end of 16S rRNA in the 30S particle. May play a critical role in biogenesis of 30S subunits. This Coxiella burnetii (strain Dugway 5J108-111) protein is Ribosomal RNA small subunit methyltransferase A.